Consider the following 172-residue polypeptide: Adenine phosphoribosyltransferase (172 aa).

Belongs to the purine/pyrimidine phosphoribosyltransferase family. In terms of assembly, homodimer.

Its subcellular location is the cytoplasm. It carries out the reaction AMP + diphosphate = 5-phospho-alpha-D-ribose 1-diphosphate + adenine. Its pathway is purine metabolism; AMP biosynthesis via salvage pathway; AMP from adenine: step 1/1. In terms of biological role, catalyzes a salvage reaction resulting in the formation of AMP, that is energically less costly than de novo synthesis. The chain is Adenine phosphoribosyltransferase from Clostridium botulinum (strain Alaska E43 / Type E3).